The primary structure comprises 657 residues: Cyclic-di-AMP phosphodiesterase PdeA (657 aa).

A run of 2 helical transmembrane segments spans residues 13-35 (PLYG…SWWL) and 37-53 (ALVV…MFYF). Positions 74 to 137 (RSEEEALVEM…ITGNDEKGIM (64 aa)) are PAS-like. One can recognise a GGDEF domain in the interval 175-303 (NKSVFAVIFL…GGDQVVIKQP (129 aa)). The tract at residues 342–498 (VFVMGHRYPD…IEATALLSGI (157 aa)) is DHH. Positions 347, 351, 353, 422, 446, and 501 each coordinate Mn(2+). The tract at residues 592–645 (VITLRPDKLIGISARSLGQINVQVIMEKLGGGGHLSNAATQLKDVTIAEAEKQL) is DHHA1.

It belongs to the GdpP/PdeA phosphodiesterase family. The cofactor is heme b. Mn(2+) serves as cofactor.

The protein localises to the cell membrane. The enzyme catalyses 3',3'-c-di-AMP + H2O = 5'-O-phosphonoadenylyl-(3'-&gt;5')-adenosine + H(+). Has phosphodiesterase (PDE) activity against cyclic-di-AMP (c-di-AMP). Overexpression decreases export of c-di-AMP, leads to slightly increased susceptibility to the antibiotic cefuroxime and somewhat slower growth in macrophages. There are at least 2 PDEs for c-di-AMP in this bacteria (this one and pgpH); this may be the major PDE for intracellular growth in host macrophages. During host infection c-di-AMP is secreted into the host cytoplasm which leads to interferon-beta production and secretion by the host. c-di-AMP is a second messenger that mediates growth, cell wall stability and virulence. May monitor cellular heme or NO levels. This Listeria monocytogenes serotype 1/2a (strain 10403S) protein is Cyclic-di-AMP phosphodiesterase PdeA.